The following is a 280-amino-acid chain: Monoacylglycerol lipase (280 aa).

The active-site Nucleophile is Ser-111. Active-site charge relay system residues include Asp-227 and His-257.

Belongs to the AB hydrolase superfamily.

The protein resides in the secreted. It is found in the cell wall. It catalyses the reaction Hydrolyzes glycerol monoesters of long-chain fatty acids.. In terms of biological role, contributes to cell growth, probably by hydrolyzing exogenous lipids. Catalyzes the hydrolysis of monoacylglycerols (MAG) with fatty acid chains ranging from C14 to C18, with a maximum activity on monoolein. Is unable to hydrolyze long-chain diacylglycerol (DAG). The polypeptide is Monoacylglycerol lipase (Mycolicibacterium smegmatis (strain ATCC 700084 / mc(2)155) (Mycobacterium smegmatis)).